A 160-amino-acid polypeptide reads, in one-letter code: Large ribosomal subunit protein uL22c (160 aa).

This sequence belongs to the universal ribosomal protein uL22 family. As to quaternary structure, part of the 50S ribosomal subunit.

Its subcellular location is the plastid. It is found in the chloroplast. Functionally, this protein binds specifically to 23S rRNA. In terms of biological role, the globular domain of the protein is located near the polypeptide exit tunnel on the outside of the subunit, while an extended beta-hairpin is found that lines the wall of the exit tunnel in the center of the 70S ribosome. This chain is Large ribosomal subunit protein uL22c (rpl22), found in Lepidium virginicum (Virginia pepperweed).